Consider the following 123-residue polypeptide: Ribosome-binding factor A (123 aa).

The protein belongs to the RbfA family. Monomer. Binds 30S ribosomal subunits, but not 50S ribosomal subunits or 70S ribosomes.

It localises to the cytoplasm. One of several proteins that assist in the late maturation steps of the functional core of the 30S ribosomal subunit. Associates with free 30S ribosomal subunits (but not with 30S subunits that are part of 70S ribosomes or polysomes). Required for efficient processing of 16S rRNA. May interact with the 5'-terminal helix region of 16S rRNA. The protein is Ribosome-binding factor A of Cupriavidus metallidurans (strain ATCC 43123 / DSM 2839 / NBRC 102507 / CH34) (Ralstonia metallidurans).